Reading from the N-terminus, the 375-residue chain is Alcohol dehydrogenase 1A (375 aa).

Position 2 is an N-acetylserine (S2). S23 carries the phosphoserine modification. Y35 carries the phosphotyrosine modification. Residue C47 coordinates Zn(2+). 48–52 (GTDDH) is an NAD(+) binding site. Residues H68, C98, C101, C104, C112, and C175 each contribute to the Zn(2+) site. Residues 200–205 (GLGGVG), D224, K229, I270, 293–295 (VGV), 318–320 (AVY), and R370 contribute to the NAD(+) site.

Belongs to the zinc-containing alcohol dehydrogenase family. In terms of assembly, dimer of identical or heterodimer of closely related subunits alpha, beta, or gamma that are encoded by genes ADH1A, ADH1B, and ADH1C, respectively. It depends on Zn(2+) as a cofactor.

The protein resides in the cytoplasm. The catalysed reaction is a primary alcohol + NAD(+) = an aldehyde + NADH + H(+). The enzyme catalyses a secondary alcohol + NAD(+) = a ketone + NADH + H(+). It carries out the reaction butan-1-ol + NAD(+) = butanal + NADH + H(+). It catalyses the reaction 1-propanol + NAD(+) = propanal + NADH + H(+). The catalysed reaction is propan-2-ol + NAD(+) = acetone + NADH + H(+). Its function is as follows. Alcohol dehydrogenase. Oxidizes primary as well as secondary alcohols. Ethanol is a very poor substrate. The chain is Alcohol dehydrogenase 1A (ADH1A) from Macaca mulatta (Rhesus macaque).